A 348-amino-acid polypeptide reads, in one-letter code: NADH-ubiquinone oxidoreductase chain 2 (348 aa).

9 consecutive transmembrane segments (helical) span residues 13–33 (VITG…WAGL), 60–80 (FLAQ…NNLL), 96–116 (PLAM…HFWV), 124–144 (PLTS…SIMY), 150–170 (INTH…SWGG), 200–220 (TITT…FLTL), 241–261 (LMPL…LTGF), 278–298 (IIPT…MRLI), and 325–345 (LFIP…PLIL).

This sequence belongs to the complex I subunit 2 family. As to quaternary structure, core subunit of respiratory chain NADH dehydrogenase (Complex I) which is composed of 45 different subunits. Interacts with TMEM242.

Its subcellular location is the mitochondrion inner membrane. It catalyses the reaction a ubiquinone + NADH + 5 H(+)(in) = a ubiquinol + NAD(+) + 4 H(+)(out). Its function is as follows. Core subunit of the mitochondrial membrane respiratory chain NADH dehydrogenase (Complex I) which catalyzes electron transfer from NADH through the respiratory chain, using ubiquinone as an electron acceptor. Essential for the catalytic activity and assembly of complex I. This chain is NADH-ubiquinone oxidoreductase chain 2, found in Papio hamadryas (Hamadryas baboon).